A 474-amino-acid polypeptide reads, in one-letter code: MSKKLHIKTWGCQMNEYDSSKMADLMDEYEGYTLTEEASEADVLLLNTCSIREKAQEKVFHQLGRWKKLKEKNPDLIIGVGGCVASQEGKVIKERAQCVDLIFGPQTLHRLPEMIDQIRDGGKAVIDISFPEIEKFDKLPEPRADGPSAFVSIMEGCSKYCSFCVVPYTRGEEVSRPLDDIILEIAQLADQGVREVNLLGQNVNAYRGATHDDEICTFAELLRYVAAIDGIDRLRFTTSHPIEFTQDIIDVYEDTPELVSFLHLPVQSGSDRILTQMKRGHMAIEYKSIIRRLRKARPDIQISSDFIIGFPGESKQDFADTMKLIEDVQFDHSFSFIYSARPGTPAADLPDDVTLAEKKERLAILQDRITQQAMRYSRQMLGTVQRILVEGPSVKNPMELRGRTETSRVVNFEADPKHIGSFVDVEIVDVYTNSLRGTFVRGEDEMDLRRSLTPSDILAKHKKDDDLGVTQYIP.

An MTTase N-terminal domain is found at 3-120 (KKLHIKTWGC…LPEMIDQIRD (118 aa)). Cysteine 12, cysteine 49, cysteine 83, cysteine 157, cysteine 161, and cysteine 164 together coordinate [4Fe-4S] cluster. A Radical SAM core domain is found at 143-375 (RADGPSAFVS…QDRITQQAMR (233 aa)). The region spanning 378–441 (RQMLGTVQRI…TNSLRGTFVR (64 aa)) is the TRAM domain.

This sequence belongs to the methylthiotransferase family. MiaB subfamily. In terms of assembly, monomer. [4Fe-4S] cluster serves as cofactor.

Its subcellular location is the cytoplasm. It carries out the reaction N(6)-dimethylallyladenosine(37) in tRNA + (sulfur carrier)-SH + AH2 + 2 S-adenosyl-L-methionine = 2-methylsulfanyl-N(6)-dimethylallyladenosine(37) in tRNA + (sulfur carrier)-H + 5'-deoxyadenosine + L-methionine + A + S-adenosyl-L-homocysteine + 2 H(+). Catalyzes the methylthiolation of N6-(dimethylallyl)adenosine (i(6)A), leading to the formation of 2-methylthio-N6-(dimethylallyl)adenosine (ms(2)i(6)A) at position 37 in tRNAs that read codons beginning with uridine. In Shewanella sediminis (strain HAW-EB3), this protein is tRNA-2-methylthio-N(6)-dimethylallyladenosine synthase.